Here is a 92-residue protein sequence, read N- to C-terminus: Sugar fermentation stimulation protein B (92 aa).

The H-T-H motif DNA-binding region spans 50 to 69 (EMIIAKALGTDPWVIWPSRY).

Belongs to the ner transcriptional regulatory family.

Its function is as follows. This protein is involved in positive regulation of the metabolism of sugars. The chain is Sugar fermentation stimulation protein B (sfsB) from Escherichia coli O157:H7.